A 725-amino-acid chain; its full sequence is Methionine--tRNA ligase (725 aa).

The short motif at 27-37 (PYANGQIHIGH) is the 'HIGH' region element. Residues C158, C161, C171, and C174 each coordinate Zn(2+). Residues 348-352 (KMSKS) carry the 'KMSKS' region motif. K351 is an ATP binding site. Residues 619-725 (DFAKIDLRIA…SGAKPGMRVK (107 aa)) form the tRNA-binding domain.

The protein belongs to the class-I aminoacyl-tRNA synthetase family. MetG type 1 subfamily. As to quaternary structure, homodimer. Zn(2+) is required as a cofactor.

The protein resides in the cytoplasm. The enzyme catalyses tRNA(Met) + L-methionine + ATP = L-methionyl-tRNA(Met) + AMP + diphosphate. Its function is as follows. Is required not only for elongation of protein synthesis but also for the initiation of all mRNA translation through initiator tRNA(fMet) aminoacylation. The sequence is that of Methionine--tRNA ligase from Burkholderia mallei (strain NCTC 10247).